The chain runs to 528 residues: Protein spinster homolog 1 (528 aa).

The tract at residues Met1 to Glu38 is disordered. At Ala2 the chain carries N-acetylalanine. The next 12 membrane-spanning stretches (helical) occupy residues Leu60–Ala80, Gly98–Leu118, Tyr126–Pro146, Val160–Val180, Met187–Ser207, Trp218–Val238, Leu278–Leu298, Leu323–Ile343, Leu357–Ala377, Ile381–Ile401, Phe421–Ile441, and Met465–Ile485. Phosphoserine is present on Ser518.

This sequence belongs to the major facilitator superfamily. Spinster (TC 2.A.1.49) family. In terms of assembly, interacts with BCL2 and BCL2L1. In terms of tissue distribution, expressed in liver (at mRNA and protein levels).

The protein resides in the lysosome membrane. The catalysed reaction is a 1-acyl-sn-glycero-3-phosphocholine(out) + H(+)(out) = a 1-acyl-sn-glycero-3-phosphocholine(in) + H(+)(in). It catalyses the reaction 1-hexadecanoyl-sn-glycero-3-phosphocholine(out) + H(+)(out) = 1-hexadecanoyl-sn-glycero-3-phosphocholine(in) + H(+)(in). It carries out the reaction 1-(9Z-octadecenoyl)-sn-glycero-3-phosphocholine(out) + H(+)(out) = 1-(9Z-octadecenoyl)-sn-glycero-3-phosphocholine(in) + H(+)(in). The enzyme catalyses 1-(5Z,8Z,11Z,14Z-eicosatetraenoyl)-sn-glycero-3-phosphocholine(out) + H(+)(out) = 1-(5Z,8Z,11Z,14Z-eicosatetraenoyl)-sn-glycero-3-phosphocholine(in) + H(+)(in). The catalysed reaction is 1-(4Z,7Z,10Z,13Z,16Z,19Z-docosahexaenoyl)-sn-glycero-3-phosphocholine(out) + H(+)(out) = 1-(4Z,7Z,10Z,13Z,16Z,19Z-docosahexaenoyl)-sn-glycero-3-phosphocholine(in) + H(+)(in). It catalyses the reaction a 1-acyl-sn-glycero-3-phosphoethanolamine(out) + H(+)(out) = a 1-acyl-sn-glycero-3-phosphoethanolamine(in) + H(+)(in). It carries out the reaction 1-(9Z-octadecenoyl)-sn-glycero-3-phosphoethanolamine(out) + H(+)(out) = 1-(9Z-octadecenoyl)-sn-glycero-3-phosphoethanolamine(in) + H(+)(in). The enzyme catalyses 1-acyl-sn-glycero-3-phospho-(1'-sn-glycerol)(out) + H(+)(out) = 1-acyl-sn-glycero-3-phospho-(1'-sn-glycerol)(in) + H(+)(in). The catalysed reaction is 1-(9Z-octadecenoyl)-sn-glycero-3-phospho-(1'-sn-glycerol)(out) + H(+)(out) = 1-(9Z-octadecenoyl)-sn-glycero-3-phospho-(1'-sn-glycerol)(in) + H(+)(in). It catalyses the reaction a 1-O-(1Z-alkenyl)-sn-glycero-3-phosphocholine(out) + H(+)(out) = a 1-O-(1Z-alkenyl)-sn-glycero-3-phosphocholine(in) + H(+)(in). It carries out the reaction 1-(1Z-hexadecenyl)-sn-glycero-3-phosphocholine(out) + H(+)(out) = 1-(1Z-hexadecenyl)-sn-glycero-3-phosphocholine(in) + H(+)(in). The enzyme catalyses a 1-O-(1Z-alkenyl)-sn-glycero-3-phosphoethanolamine(out) + H(+)(out) = a 1-O-(1Z-alkenyl)-sn-glycero-3-phosphoethanolamine(in) + H(+)(in). The catalysed reaction is 1-O-(1Z-hexadecenyl)-sn-glycero-3-phosphoethanolamine(out) + H(+)(out) = 1-O-(1Z-hexadecenyl)-sn-glycero-3-phosphoethanolamine(in) + H(+)(in). Its function is as follows. Plays a critical role in the phospholipid salvage pathway from lysosomes to the cytosol. Mediates the rate-limiting, proton-dependent, lysosomal efflux of lysophospholipids, which can then be reacylated by acyltransferases in the endoplasmic reticulum to form phospholipids. Selective for zwitterionic headgroups such as lysophosphatidylcholine (LPC) and lysophosphatidylethanolamine (LPE), can also transport lysophosphatidylglycerol (LPG), but not other anionic lysophospholipids, sphingosine, nor sphingomyelin. Transports lysophospholipids with saturated, monounsaturated, and polyunsaturated fatty acids, such as 1-hexadecanoyl-sn-glycero-3-phosphocholine, 1-(9Z-octadecenoyl)-sn-glycero-3-phosphocholine and 1-(4Z,7Z,10Z,13Z,16Z,19Z-docosahexaenoyl)-sn-glycero-3-phosphocholine, respectively. Can also transport lysoplasmalogen (LPC with a fatty alcohol) such as 1-(1Z-hexadecenyl)-sn-glycero-3-phosphocholine. Essential player in lysosomal homeostasis. Crucial for cell survival under conditions of nutrient limitation. May be involved in necrotic or autophagic cell death. The polypeptide is Protein spinster homolog 1 (Spns1) (Mus musculus (Mouse)).